A 161-amino-acid chain; its full sequence is PRS fimbrial major pilin protein (161 aa).

Belongs to the fimbrial protein family.

It is found in the secreted. Its subcellular location is the fimbrium. Its function is as follows. Fimbriae (also called pili), polar filaments radiating from the surface of the bacterium to a length of 0.5-1.5 micrometers and numbering 100-300 per cell, enable bacteria to colonize the epithelium of specific host organs. The polypeptide is PRS fimbrial major pilin protein (prsA) (Escherichia coli).